The chain runs to 453 residues: Bifunctional protein GlmU (453 aa).

Residues 1 to 225 are pyrophosphorylase; sequence MNIVILAAGT…EWETLGVNSK (225 aa). UDP-N-acetyl-alpha-D-glucosamine is bound by residues 6 to 9, K20, Q71, 76 to 77, 98 to 100, G135, E150, N165, and N223; these read LAAG, GT, and YGD. Residue D100 coordinates Mg(2+). N223 lines the Mg(2+) pocket. Positions 226–246 are linker; the sequence is AQLAELERIHQRNVADALLAD. The N-acetyltransferase stretch occupies residues 247–453; sequence GVTLADPARI…GYVRPVKKKS (207 aa). Residues R329 and K347 each coordinate UDP-N-acetyl-alpha-D-glucosamine. The Proton acceptor role is filled by H359. UDP-N-acetyl-alpha-D-glucosamine is bound by residues Y362 and N373. Acetyl-CoA is bound by residues A376, 382–383, S401, and A419; that span reads NY.

The protein in the N-terminal section; belongs to the N-acetylglucosamine-1-phosphate uridyltransferase family. This sequence in the C-terminal section; belongs to the transferase hexapeptide repeat family. Homotrimer. Requires Mg(2+) as cofactor.

It is found in the cytoplasm. It catalyses the reaction alpha-D-glucosamine 1-phosphate + acetyl-CoA = N-acetyl-alpha-D-glucosamine 1-phosphate + CoA + H(+). It carries out the reaction N-acetyl-alpha-D-glucosamine 1-phosphate + UTP + H(+) = UDP-N-acetyl-alpha-D-glucosamine + diphosphate. It participates in nucleotide-sugar biosynthesis; UDP-N-acetyl-alpha-D-glucosamine biosynthesis; N-acetyl-alpha-D-glucosamine 1-phosphate from alpha-D-glucosamine 6-phosphate (route II): step 2/2. Its pathway is nucleotide-sugar biosynthesis; UDP-N-acetyl-alpha-D-glucosamine biosynthesis; UDP-N-acetyl-alpha-D-glucosamine from N-acetyl-alpha-D-glucosamine 1-phosphate: step 1/1. It functions in the pathway bacterial outer membrane biogenesis; LPS lipid A biosynthesis. In terms of biological role, catalyzes the last two sequential reactions in the de novo biosynthetic pathway for UDP-N-acetylglucosamine (UDP-GlcNAc). The C-terminal domain catalyzes the transfer of acetyl group from acetyl coenzyme A to glucosamine-1-phosphate (GlcN-1-P) to produce N-acetylglucosamine-1-phosphate (GlcNAc-1-P), which is converted into UDP-GlcNAc by the transfer of uridine 5-monophosphate (from uridine 5-triphosphate), a reaction catalyzed by the N-terminal domain. This Burkholderia multivorans (strain ATCC 17616 / 249) protein is Bifunctional protein GlmU.